We begin with the raw amino-acid sequence, 492 residues long: Nuclear hormone receptor family member nhr-4 (492 aa).

The nuclear receptor DNA-binding region spans 47–122 (RLICDVCGDV…VGMNPDSVQN (76 aa)). NR C4-type zinc fingers lie at residues 50 to 70 (CDVC…CNGC) and 86 to 110 (CRFG…LKKC). The tract at residues 121–143 (QNERDRNAKNGGMGGPMSSPTQS) is disordered. One can recognise an NR LBD domain in the interval 215–481 (MDFSIHSAVL…ELIQATHKTT (267 aa)).

It belongs to the nuclear hormone receptor family.

It is found in the nucleus. Its function is as follows. Orphan nuclear receptor. The chain is Nuclear hormone receptor family member nhr-4 (nhr-4) from Caenorhabditis elegans.